A 149-amino-acid chain; its full sequence is Arginine repressor (149 aa).

Belongs to the ArgR family.

It localises to the cytoplasm. The protein operates within amino-acid biosynthesis; L-arginine biosynthesis [regulation]. In terms of biological role, regulates arginine biosynthesis genes. This chain is Arginine repressor, found in Chlorobaculum parvum (strain DSM 263 / NCIMB 8327) (Chlorobium vibrioforme subsp. thiosulfatophilum).